Here is an 843-residue protein sequence, read N- to C-terminus: Translation initiation factor IF-2 (843 aa).

Residues 94-259 (QRSPEEIEAE…AHGFQSPTGP (166 aa)) are disordered. Over residues 96–135 (SPEEIEAERKREMDERRAVENAARQKAEEEAKRRAEEDAR) the composition is skewed to basic and acidic residues. The span at 136–177 (NQPAAGQPASAPAQPVAAAEPVREAPAPAAAAPAPASAAPSA) shows a compositional bias: low complexity. Basic and acidic residues-rich tracts occupy residues 178 to 219 (DARK…EKAP) and 227 to 236 (TTDEESDSFR). A compositionally biased stretch (basic residues) spans 237–250 (RGGRGKSRLKKRNA). In terms of domain architecture, tr-type G spans 343-512 (SRAPVVTVMG…LLQAEVLELK (170 aa)). The G1 stretch occupies residues 352–359 (GHVDHGKT). A GTP-binding site is contributed by 352 to 359 (GHVDHGKT). The segment at 377–381 (GITQH) is G2. Positions 398–401 (DTPG) are G3. GTP is bound by residues 398–402 (DTPGH) and 452–455 (NKID). Residues 452–455 (NKID) are G4. Residues 488-490 (SAK) form a G5 region.

This sequence belongs to the TRAFAC class translation factor GTPase superfamily. Classic translation factor GTPase family. IF-2 subfamily.

The protein localises to the cytoplasm. Functionally, one of the essential components for the initiation of protein synthesis. Protects formylmethionyl-tRNA from spontaneous hydrolysis and promotes its binding to the 30S ribosomal subunits. Also involved in the hydrolysis of GTP during the formation of the 70S ribosomal complex. The sequence is that of Translation initiation factor IF-2 from Pseudomonas savastanoi pv. phaseolicola (strain 1448A / Race 6) (Pseudomonas syringae pv. phaseolicola (strain 1448A / Race 6)).